The chain runs to 323 residues: Thioredoxin reductase (323 aa).

Position 42-49 (42-49 (YRAEADGA)) interacts with FAD. Cys-143 and Cys-146 are oxidised to a cystine. 286–295 (DVLCNEVKQA) contributes to the FAD binding site.

Belongs to the class-II pyridine nucleotide-disulfide oxidoreductase family. In terms of assembly, homodimer. Requires FAD as cofactor.

The protein resides in the cytoplasm. It carries out the reaction [thioredoxin]-dithiol + NADP(+) = [thioredoxin]-disulfide + NADPH + H(+). The chain is Thioredoxin reductase (trxB) from Aquifex aeolicus (strain VF5).